We begin with the raw amino-acid sequence, 514 residues long: Inosine-5'-monophosphate dehydrogenase (514 aa).

CBS domains lie at 112 to 171 (FISK…DTPV) and 175 to 233 (MTRR…PHST). NAD(+) contacts are provided by residues 270–272 (DSS) and 320–322 (GMG). K(+)-binding residues include Gly-322 and Gly-324. Ser-325 provides a ligand contact to IMP. Cys-327 is a K(+) binding site. Cys-327 acts as the Thioimidate intermediate in catalysis. IMP contacts are provided by residues 360-362 (DGG), 383-384 (GG), and 407-411 (YRGMG). Arg-425 acts as the Proton acceptor in catalysis. Position 437 (Gln-437) interacts with IMP. Residues Glu-496, Gly-497, and Gly-498 each contribute to the K(+) site. A Microbody targeting signal motif is present at residues 512 to 514 (AKM).

The protein belongs to the IMPDH/GMPR family. As to quaternary structure, heterotetramer. Interacts with glycosomal protein sorting receptor PEX5. It depends on K(+) as a cofactor.

The protein localises to the glycosome. It catalyses the reaction IMP + NAD(+) + H2O = XMP + NADH + H(+). Its pathway is purine metabolism; XMP biosynthesis via de novo pathway; XMP from IMP: step 1/1. Mycophenolic acid (MPA) is a non-competitive inhibitor that prevents formation of the closed enzyme conformation by binding to the same site as the amobile flap. In contrast, mizoribine monophosphate (MZP) is a competitive inhibitor that induces the closed conformation. MPA is a potent inhibitor of mammalian IMPDHs but a poor inhibitor of the bacterial enzymes. MZP is a more potent inhibitor of bacterial IMPDH. Potently inhibited by MPA. Inhibited by XMP and GMP. Functionally, catalyzes the conversion of inosine 5'-phosphate (IMP) to xanthosine 5'-phosphate (XMP), the first committed and rate-limiting step in the de novo synthesis of guanine nucleotides, and therefore plays an important role in the regulation of cell growth. The sequence is that of Inosine-5'-monophosphate dehydrogenase from Leishmania donovani.